The sequence spans 786 residues: Endonuclease MutS2 (786 aa).

Position 335–342 (335–342) interacts with ATP; that stretch reads GPNTGGKT. Positions 711 to 786 constitute a Smr domain; sequence LDLRGERFEN…GLGVTVVELK (76 aa).

Belongs to the DNA mismatch repair MutS family. MutS2 subfamily. In terms of assembly, homodimer. Binds to stalled ribosomes, contacting rRNA.

Its function is as follows. Endonuclease that is involved in the suppression of homologous recombination and thus may have a key role in the control of bacterial genetic diversity. Acts as a ribosome collision sensor, splitting the ribosome into its 2 subunits. Detects stalled/collided 70S ribosomes which it binds and splits by an ATP-hydrolysis driven conformational change. Acts upstream of the ribosome quality control system (RQC), a ribosome-associated complex that mediates the extraction of incompletely synthesized nascent chains from stalled ribosomes and their subsequent degradation. Probably generates substrates for RQC. This is Endonuclease MutS2 from Bacillus cereus (strain ATCC 10987 / NRS 248).